The following is a 411-amino-acid chain: ATP-dependent Clp protease ATP-binding subunit ClpX (411 aa).

The region spanning 1 to 51 (MAKKKDEEYCSFCGMPRTQVNLMLEGVHAHICDECALRAGEVVREALQKFK) is the ClpX-type ZB domain. Positions 10, 13, 32, and 35 each coordinate Zn(2+). Residue 119 to 126 (PTGTGKTL) coordinates ATP.

It belongs to the ClpX chaperone family. As to quaternary structure, component of the ClpX-ClpP complex. Forms a hexameric ring that, in the presence of ATP, binds to fourteen ClpP subunits assembled into a disk-like structure with a central cavity, resembling the structure of eukaryotic proteasomes.

Functionally, ATP-dependent specificity component of the Clp protease. It directs the protease to specific substrates. Can perform chaperone functions in the absence of ClpP. This Porphyromonas gingivalis (strain ATCC 33277 / DSM 20709 / CIP 103683 / JCM 12257 / NCTC 11834 / 2561) protein is ATP-dependent Clp protease ATP-binding subunit ClpX.